We begin with the raw amino-acid sequence, 168 residues long: Alpha-N-acetylgalactosamine-specific lectin (168 aa).

The N-terminal stretch at 1–18 (MAFFRALCFVLLVGFAAA) is a signal peptide. Residues 38 to 163 (YNGNCYRYFG…CSRAFAYVCK (126 aa)) enclose the C-type lectin domain. 2 disulfides stabilise this stretch: Cys59/Cys162 and Cys136/Cys154.

Monomer, homodimer and homooligomer.

Its function is as follows. Alpha-N-acetylgalactosamine-specific lectin. The oligomeric form has Ca(2+)-dependent hemagglutination activity towards sheep erythrocytes. Its hemagglutination activity is inhibited by various monosaccharides, oligosaccharides and glycopeptides, including inhibition by GalNAc, blood group A trisaccharide, Tn antigen, mucin and asialomucin. The chain is Alpha-N-acetylgalactosamine-specific lectin from Patiria pectinifera (Starfish).